The following is a 194-amino-acid chain: Auxin-induced protein 22A (194 aa).

An EAR-like (transcriptional repression) motif is present at residues 13 to 17 (LRLGL). Positions 40–62 (EIDDVGDENSSSGGGGDRKMENK) are disordered. The PB1 domain maps to 85-173 (KMYVKVSMDG…KRLRIMKRAD (89 aa)).

This sequence belongs to the Aux/IAA family. Homodimers and heterodimers.

The protein resides in the nucleus. Aux/IAA proteins are short-lived transcriptional factors that function as repressors of early auxin response genes at low auxin concentrations. Repression is thought to result from the interaction with auxin response factors (ARFs), proteins that bind to the auxin-responsive promoter element (AuxRE). Formation of heterodimers with ARF proteins may alter their ability to modulate early auxin response genes expression. This chain is Auxin-induced protein 22A (AUX22A), found in Vigna radiata var. radiata (Mung bean).